A 125-amino-acid chain; its full sequence is Large ribosomal subunit protein bL12 (125 aa).

This sequence belongs to the bacterial ribosomal protein bL12 family. As to quaternary structure, homodimer. Part of the ribosomal stalk of the 50S ribosomal subunit. Forms a multimeric L10(L12)X complex, where L10 forms an elongated spine to which 2 to 4 L12 dimers bind in a sequential fashion. Binds GTP-bound translation factors.

Its function is as follows. Forms part of the ribosomal stalk which helps the ribosome interact with GTP-bound translation factors. Is thus essential for accurate translation. The polypeptide is Large ribosomal subunit protein bL12 (Hyphomonas neptunium (strain ATCC 15444)).